Consider the following 357-residue polypeptide: 3-isopropylmalate dehydrogenase (357 aa).

Residue 76-89 (GPQWDTIDPALRPE) participates in NAD(+) binding. Residues Arg96, Arg106, Arg134, and Asp224 each coordinate substrate. Positions 224, 248, and 252 each coordinate Mg(2+). 282-294 (GSAPDIAGQGIAN) provides a ligand contact to NAD(+).

The protein belongs to the isocitrate and isopropylmalate dehydrogenases family. LeuB type 1 subfamily. In terms of assembly, homodimer. Mg(2+) is required as a cofactor. Mn(2+) serves as cofactor.

It is found in the cytoplasm. It catalyses the reaction (2R,3S)-3-isopropylmalate + NAD(+) = 4-methyl-2-oxopentanoate + CO2 + NADH. It functions in the pathway amino-acid biosynthesis; L-leucine biosynthesis; L-leucine from 3-methyl-2-oxobutanoate: step 3/4. Functionally, catalyzes the oxidation of 3-carboxy-2-hydroxy-4-methylpentanoate (3-isopropylmalate) to 3-carboxy-4-methyl-2-oxopentanoate. The product decarboxylates to 4-methyl-2 oxopentanoate. The sequence is that of 3-isopropylmalate dehydrogenase from Xanthomonas campestris pv. campestris (strain 8004).